Reading from the N-terminus, the 147-residue chain is Nudix hydrolase 1 (147 aa).

Ser2 bears the N-acetylserine mark. One can recognise a Nudix hydrolase domain in the interval 7-140 (IPRVAVVVFI…EKLFGSGFNP (134 aa)). The short motif at 41-62 (GHLEFGESFEECAAREVMEETG) is the Nudix box element. 2 residues coordinate Mg(2+): Glu56 and Glu60.

Belongs to the Nudix hydrolase family. As to quaternary structure, homodimer. Mg(2+) serves as cofactor. Requires Mn(2+) as cofactor. As to expression, expressed in roots, stems and leaves.

It is found in the cytoplasm. It catalyses the reaction 7,8-dihydroneopterin 3'-triphosphate + H2O = 7,8-dihydroneopterin 3'-phosphate + diphosphate + H(+). It carries out the reaction NAD(+) + H2O = beta-nicotinamide D-ribonucleotide + AMP + 2 H(+). The enzyme catalyses NADH + H2O = reduced beta-nicotinamide D-ribonucleotide + AMP + 2 H(+). The catalysed reaction is 8-oxo-dGTP + H2O = 8-oxo-dGMP + diphosphate + H(+). Its function is as follows. Mediates the hydrolysis of some nucleoside diphosphate derivatives. Its substrate specificity is unclear. In vitro, it can use NTP, dNTP, 8-oxo-GTP, 8-oxo-dGTP, dGTP, dATP, dTTP or dihydroneopterin triphosphate (DHNTP) as substrate. Has some NADH pyrophosphatase activity in vitro; however, such activity may not be relevant in vivo due to the high concentration of manganese used during the experiments. Plays an important role in protection against oxidative DNA and RNA damage by removing oxidatively damaged form of guanine. The polypeptide is Nudix hydrolase 1 (NUDT1) (Arabidopsis thaliana (Mouse-ear cress)).